The primary structure comprises 186 residues: ADP-ribosylation factor-like protein 6 (186 aa).

G2 is lipidated: N-myristoyl glycine. Residues 24-31 (GLDNSGKT), T50, 69-73 (DMSGQ), G72, 130-133 (NKMD), and A164 contribute to the GTP site. T50 lines the Mg(2+) pocket.

The protein belongs to the small GTPase superfamily. Arf family. As to quaternary structure, interacts with SEC61B, ARL6IP1, ARL6IP2, ARL6IP3, ARL6IP4 ARL6IP5 and ARL6IP6. Interacts (GTP-bound form) with the BBSome a complex that contains BBS1, BBS2, BBS4, BBS5, BBS7, BBS8/TTC8, BBS9 and BBIP10. Interacts (GTP-free form) with IFT27. As to expression, most abundant in brain and kidney. Expressed in heart and eye. Isoform 2 is expressed only in the retina.

The protein localises to the cell projection. It localises to the cilium membrane. Its subcellular location is the cytoplasm. The protein resides in the cytoskeleton. It is found in the cilium axoneme. The protein localises to the cilium basal body. Its function is as follows. Involved in membrane protein trafficking at the base of the ciliary organelle. Mediates recruitment onto plasma membrane of the BBSome complex which would constitute a coat complex required for sorting of specific membrane proteins to the primary cilia. Together with BBS1, is necessary for correct trafficking of PKD1 to primary cilia. Together with the BBSome complex and LTZL1, controls SMO ciliary trafficking and contributes to the sonic hedgehog (SHH) pathway regulation. May regulate cilia assembly and disassembly and subsequent ciliary signaling events such as the Wnt signaling cascade. Isoform 2 may be required for proper retinal function and organization. The sequence is that of ADP-ribosylation factor-like protein 6 (Arl6) from Mus musculus (Mouse).